The chain runs to 86 residues: Muscarinic toxin-like protein (86 aa).

An N-terminal signal peptide occupies residues Met-1–Thr-21. Cystine bridges form between Cys-24/Cys-45, Cys-38/Cys-62, Cys-66/Cys-78, and Cys-79/Cys-84.

This sequence belongs to the three-finger toxin family. Short-chain subfamily. Orphan group VIII (haditoxin) sub-subfamily. Homodimer; non-covalently linked. Expressed by the venom gland.

The protein localises to the secreted. Functionally, antagonist of muscle and neuronal nicotinic acetylcholine receptors (nAChR) with highest affinity for neuronal alpha-7/CHRNA7 nAChRs. The chain is Muscarinic toxin-like protein from Bungarus multicinctus (Many-banded krait).